The sequence spans 161 residues: Cyclic pyranopterin monophosphate synthase (161 aa).

Residues 78-80 (LCH) and 116-117 (ME) each bind substrate. Aspartate 131 is an active-site residue.

Belongs to the MoaC family. As to quaternary structure, homohexamer; trimer of dimers.

The catalysed reaction is (8S)-3',8-cyclo-7,8-dihydroguanosine 5'-triphosphate = cyclic pyranopterin phosphate + diphosphate. It functions in the pathway cofactor biosynthesis; molybdopterin biosynthesis. Functionally, catalyzes the conversion of (8S)-3',8-cyclo-7,8-dihydroguanosine 5'-triphosphate to cyclic pyranopterin monophosphate (cPMP). In Bordetella pertussis (strain Tohama I / ATCC BAA-589 / NCTC 13251), this protein is Cyclic pyranopterin monophosphate synthase.